The primary structure comprises 322 residues: Methionyl-tRNA formyltransferase (322 aa).

Residue 112 to 115 (SLLP) participates in (6S)-5,6,7,8-tetrahydrofolate binding.

The protein belongs to the Fmt family.

The catalysed reaction is L-methionyl-tRNA(fMet) + (6R)-10-formyltetrahydrofolate = N-formyl-L-methionyl-tRNA(fMet) + (6S)-5,6,7,8-tetrahydrofolate + H(+). Attaches a formyl group to the free amino group of methionyl-tRNA(fMet). The formyl group appears to play a dual role in the initiator identity of N-formylmethionyl-tRNA by promoting its recognition by IF2 and preventing the misappropriation of this tRNA by the elongation apparatus. In Synechococcus sp. (strain JA-2-3B'a(2-13)) (Cyanobacteria bacterium Yellowstone B-Prime), this protein is Methionyl-tRNA formyltransferase.